Here is a 340-residue protein sequence, read N- to C-terminus: DNA-directed RNA polymerase subunit alpha (340 aa).

Residues 1-236 (MLSLSKNWNT…EQLQLFISFE (236 aa)) are alpha N-terminal domain (alpha-NTD). Residues 246-340 (TDALPFSPYL…LSNRYEDSYN (95 aa)) are alpha C-terminal domain (alpha-CTD).

This sequence belongs to the RNA polymerase alpha chain family. Homodimer. The RNAP catalytic core consists of 2 alpha, 1 beta, 1 beta' and 1 omega subunit. When a sigma factor is associated with the core the holoenzyme is formed, which can initiate transcription.

It catalyses the reaction RNA(n) + a ribonucleoside 5'-triphosphate = RNA(n+1) + diphosphate. Its function is as follows. DNA-dependent RNA polymerase catalyzes the transcription of DNA into RNA using the four ribonucleoside triphosphates as substrates. This chain is DNA-directed RNA polymerase subunit alpha, found in Rickettsia felis (strain ATCC VR-1525 / URRWXCal2) (Rickettsia azadi).